Consider the following 358-residue polypeptide: uncharacterized protein (358 aa).

The disordered stretch occupies residues 1-47 (MGNVAGETRANVIPLHTNRSRVAARRRAGQRAESRQHPSLLSDPNDR). Residues 18–29 (NRSRVAARRRAG) are compositionally biased toward basic residues.

To M.leprae ML2427.

This is an uncharacterized protein from Mycobacterium tuberculosis (strain CDC 1551 / Oshkosh).